The following is a 248-amino-acid chain: Isoprenyl transferase (248 aa).

Aspartate 23 is a catalytic residue. Mg(2+) is bound at residue aspartate 23. Residues 24-27, tryptophan 28, arginine 36, histidine 40, and 68-70 each bind substrate; these read GNGR and STE. The active-site Proton acceptor is asparagine 71. Residues tryptophan 72, arginine 74, arginine 185, and 191-193 contribute to the substrate site; that span reads RIS. Mg(2+) is bound at residue glutamate 204.

Belongs to the UPP synthase family. As to quaternary structure, homodimer. Mg(2+) serves as cofactor.

In terms of biological role, catalyzes the condensation of isopentenyl diphosphate (IPP) with allylic pyrophosphates generating different type of terpenoids. This Neisseria meningitidis serogroup A / serotype 4A (strain DSM 15465 / Z2491) protein is Isoprenyl transferase.